The sequence spans 383 residues: Protein RecA (383 aa).

79 to 86 is an ATP binding site; it reads GPESSGKT. Positions 347-369 are disordered; the sequence is IEEDNTEEKQSSKEKETDEKADK. Over residues 353–369 the composition is skewed to basic and acidic residues; sequence EEKQSSKEKETDEKADK.

This sequence belongs to the RecA family.

It localises to the cytoplasm. Functionally, can catalyze the hydrolysis of ATP in the presence of single-stranded DNA, the ATP-dependent uptake of single-stranded DNA by duplex DNA, and the ATP-dependent hybridization of homologous single-stranded DNAs. It interacts with LexA causing its activation and leading to its autocatalytic cleavage. The polypeptide is Protein RecA (Streptococcus mutans serotype c (strain ATCC 700610 / UA159)).